A 474-amino-acid chain; its full sequence is tRNA-2-methylthio-N(6)-dimethylallyladenosine synthase (474 aa).

Residues 3 to 120 (KKLHIKTWGC…LPEMINSVRG (118 aa)) enclose the MTTase N-terminal domain. 6 residues coordinate [4Fe-4S] cluster: C12, C49, C83, C157, C161, and C164. The region spanning 143–375 (RAEGPTAFVS…QERINQQAMA (233 aa)) is the Radical SAM core domain. Residues 378–441 (RRMLGTTQRI…PNSLRGKVVR (64 aa)) enclose the TRAM domain.

This sequence belongs to the methylthiotransferase family. MiaB subfamily. As to quaternary structure, monomer. [4Fe-4S] cluster serves as cofactor.

The protein resides in the cytoplasm. The catalysed reaction is N(6)-dimethylallyladenosine(37) in tRNA + (sulfur carrier)-SH + AH2 + 2 S-adenosyl-L-methionine = 2-methylsulfanyl-N(6)-dimethylallyladenosine(37) in tRNA + (sulfur carrier)-H + 5'-deoxyadenosine + L-methionine + A + S-adenosyl-L-homocysteine + 2 H(+). It catalyses the reaction N(6)-dimethylallyladenosine(37) in tRNA + (sulfur carrier)-SH + AH2 + S-adenosyl-L-methionine = 2-thio-N(6)-dimethylallyladenosine(37) in tRNA + (sulfur carrier)-H + 5'-deoxyadenosine + L-methionine + A + H(+). It carries out the reaction 2-thio-N(6)-dimethylallyladenosine(37) in tRNA + S-adenosyl-L-methionine = 2-methylsulfanyl-N(6)-dimethylallyladenosine(37) in tRNA + S-adenosyl-L-homocysteine + H(+). Its function is as follows. Catalyzes the methylthiolation of N6-(dimethylallyl)adenosine (i(6)A), leading to the formation of 2-methylthio-N6-(dimethylallyl)adenosine (ms(2)i(6)A) at position 37 in tRNAs that read codons beginning with uridine. This chain is tRNA-2-methylthio-N(6)-dimethylallyladenosine synthase, found in Salmonella typhimurium (strain LT2 / SGSC1412 / ATCC 700720).